Reading from the N-terminus, the 419-residue chain is Acyl transferase 9 (419 aa).

Residues H161 and D362 each act as proton acceptor in the active site.

Belongs to the plant acyltransferase family.

Its function is as follows. Involved in the incorporation of ferulate into the cell wall. May act as arabinoxylan feruloyl transferase. This chain is Acyl transferase 9, found in Oryza sativa subsp. japonica (Rice).